We begin with the raw amino-acid sequence, 247 residues long: ATP synthase subunit a, chloroplastic (247 aa).

Helical transmembrane passes span 36–56, 95–115, 134–154, 199–219, and 220–240; these read GQVLMTSWFVFAVIAILSIAG, IPFLGTLFLFIFVSNWSGALI, INTTVALALLTSTAYFYAGFS, LVVGVLVALVPLVVPIPIMLL, and GLFTSGIQALVFATLAGAYIG.

The protein belongs to the ATPase A chain family. In terms of assembly, F-type ATPases have 2 components, CF(1) - the catalytic core - and CF(0) - the membrane proton channel. CF(1) has five subunits: alpha(3), beta(3), gamma(1), delta(1), epsilon(1). CF(0) has four main subunits: a, b, b' and c.

The protein resides in the plastid. It is found in the chloroplast thylakoid membrane. In terms of biological role, key component of the proton channel; it plays a direct role in the translocation of protons across the membrane. This chain is ATP synthase subunit a, chloroplastic, found in Tupiella akineta (Green alga).